A 154-amino-acid polypeptide reads, in one-letter code: Universal stress protein Sll1388 (154 aa).

Belongs to the universal stress protein A family.

This chain is Universal stress protein Sll1388, found in Synechocystis sp. (strain ATCC 27184 / PCC 6803 / Kazusa).